The following is a 752-amino-acid chain: MKQRGWTLQCTAFTLFCVWCALNSVKAKRQFVNEWAAEIHGGPEAASAIAEELGYDLLGQIGSLENHYLFKHKNHPRRSRRSALHITKRLSDDDRVIWAEQQYEKERRKRSVPRDSALNLFNDPMWNQQWYLQDTRMTASLPKLDLHVIPVWQKGITGKGVVITVLDDGLEWNHTDIYANYDPEASYDFNDNDHDPFPRYDPTNENKHGTRCAGEIAMQANNHKCGVGVAYNSKVGGIRMLDGIVTDAIEASSIGFNPGHVDIYSASWGPNDDGKTVEGPGRLAQKAFEYGVKQGRQGKGSIFVWASGNGGRQGDNCDCDGYTDSIYTISISSASQQGLSPWYAEKCSSTLATSYSSGDYTDQRITSADLHNDCTETHTGTSASAPLAAGIFALALEANPNLTWRDMQHLVVWTSEYDPLANNPGWKKNGAGLMVNSRFGFGLLNAKALVDLADPRTWRNVPEKKECIIKDNNFEPRALKANGEVIVEIPTRACEGQENAINSLEHVQFEATIEYSRRGDLHVTLTSAAGTSTVLLAERERDTSPNGFKNWDFMSVHTWGENPVGTWTLKVTDMSGRMQNEGRIVNWKLILHGTSSQPEHMKQPRVYTSYNTVQNDRRGVEKMVNVVEEKPTQNSLNGNLLVPKNSSSSSVEDRRDEQVQGAPSKAMLRLLQSAFSKNTPSKQSSKIPSAKLSVPYEGLYEALEKLNKPSQLEDSEDSLYSDYVDVFYNTKPYKHRDDRLLQALMDILNEKN.

The N-terminal stretch at 1–27 is a signal peptide; the sequence is MKQRGWTLQCTAFTLFCVWCALNSVKA. Positions 28–110 are excised as a propeptide; sequence KRQFVNEWAA…QQYEKERRKR (83 aa). A Peptidase S8 domain is found at 129–450; that stretch reads QWYLQDTRMT…FGLLNAKALV (322 aa). Asp-167 functions as the Charge relay system in the catalytic mechanism. N-linked (GlcNAc...) asparagine glycosylation occurs at Asn-173. The Charge relay system role is filled by His-208. Disulfide bonds link Cys-225/Cys-374 and Cys-317/Cys-347. Catalysis depends on Ser-382, which acts as the Charge relay system. N-linked (GlcNAc...) asparagine glycosylation is present at Asn-401. In terms of domain architecture, P/Homo B spans 460–597; sequence NVPEKKECII…KLILHGTSSQ (138 aa). Cys-467 and Cys-494 are oxidised to a cystine. Residues 631-662 are disordered; it reads PTQNSLNGNLLVPKNSSSSSVEDRRDEQVQGA. N-linked (GlcNAc...) asparagine glycosylation occurs at Asn-645.

Belongs to the peptidase S8 family. Furin subfamily. Ca(2+) serves as cofactor.

It localises to the cytoplasmic vesicle. The protein localises to the secretory vesicle. It catalyses the reaction Release of protein hormones, neuropeptides and renin from their precursors, generally by hydrolysis of -Lys-Arg-|- bonds.. Involved in the processing of hormone and other protein precursors at sites comprised of pairs of basic amino acid residues. Substrates include POMC, renin, enkephalin, dynorphin, somatostatin, insulin and AGRP. The chain is Neuroendocrine convertase 1 (Pcsk1) from Rattus norvegicus (Rat).